Reading from the N-terminus, the 417-residue chain is Phosphoglycerate kinase (417 aa).

Residues 24–26 (DLN), Arg44, 67–70 (HLGR), Arg126, and Arg170 each bind substrate. Residues Lys220, Gly316, Glu347, and 373–376 (GGDS) contribute to the ATP site.

Belongs to the phosphoglycerate kinase family. Monomer.

It localises to the cytoplasm. The enzyme catalyses (2R)-3-phosphoglycerate + ATP = (2R)-3-phospho-glyceroyl phosphate + ADP. Its pathway is carbohydrate degradation; glycolysis; pyruvate from D-glyceraldehyde 3-phosphate: step 2/5. This chain is Phosphoglycerate kinase, found in Renibacterium salmoninarum (strain ATCC 33209 / DSM 20767 / JCM 11484 / NBRC 15589 / NCIMB 2235).